Reading from the N-terminus, the 344-residue chain is Uroporphyrinogen decarboxylase (344 aa).

Substrate is bound by residues 23 to 27, Asp73, Tyr149, Thr204, and His321; that span reads RQAGR.

It belongs to the uroporphyrinogen decarboxylase family. In terms of assembly, homodimer.

The protein localises to the cytoplasm. It catalyses the reaction uroporphyrinogen III + 4 H(+) = coproporphyrinogen III + 4 CO2. It participates in porphyrin-containing compound metabolism; protoporphyrin-IX biosynthesis; coproporphyrinogen-III from 5-aminolevulinate: step 4/4. In terms of biological role, catalyzes the decarboxylation of four acetate groups of uroporphyrinogen-III to yield coproporphyrinogen-III. The protein is Uroporphyrinogen decarboxylase of Francisella tularensis subsp. tularensis (strain FSC 198).